The chain runs to 231 residues: PIAGSMVLAAILLKLGGYGIIRIMQIMPMTKTDMFLPFLVLALWGAILANLTCLQQTDLKSLIAYSSISHMGLVVAAIIIQTPWGLSGAMALMIAHGFTSSALFCLANTTYERTHTRILILTRGFHNILPMATTWWLLTNLMNIATPPTMNFTSELLIMSTLFNWCPTTIILLGMSMLITASYSLHMFLSTQMGYPLLNNQTEPTHTREHLLMILHIVPLMMISMKPELVI.

The next 6 helical transmembrane spans lie at 1 to 21 (PIAGSMVLAAILLKLGGYGII), 34 to 54 (MFLPFLVLALWGAILANLTCL), 63 to 85 (IAYSSISHMGLVVAAIIIQTPWG), 89 to 111 (AMALMIAHGFTSSALFCLANTTY), 118 to 138 (ILILTRGFHNILPMATTWWLL), and 169 to 189 (TIILLGMSMLITASYSLHMFL).

Belongs to the complex I subunit 4 family.

The protein localises to the mitochondrion membrane. It carries out the reaction a ubiquinone + NADH + 5 H(+)(in) = a ubiquinol + NAD(+) + 4 H(+)(out). Its function is as follows. Core subunit of the mitochondrial membrane respiratory chain NADH dehydrogenase (Complex I) that is believed to belong to the minimal assembly required for catalysis. Complex I functions in the transfer of electrons from NADH to the respiratory chain. The immediate electron acceptor for the enzyme is believed to be ubiquinone. The chain is NADH-ubiquinone oxidoreductase chain 4 (MT-ND4) from Trimeresurus cantori (Cantor's pit viper).